Reading from the N-terminus, the 20-residue chain is Protein YfiS (20 aa).

The sequence is that of Protein YfiS from Escherichia coli (strain K12).